Reading from the N-terminus, the 114-residue chain is T cell receptor alpha variable 24 (114 aa).

A signal peptide spans 1 to 22 (MEKNPLAAPLLILWFHLDCVSS). Positions 23 to 114 (ILNVEQSPQS…EDSATYLCAF (92 aa)) constitute an Ig-like domain. Residue asparagine 42 is glycosylated (N-linked (GlcNAc...) asparagine). A disulfide bridge connects residues cysteine 45 and cysteine 112.

Alpha-beta TR is a heterodimer composed of an alpha and beta chain; disulfide-linked. The alpha-beta TR is associated with the transmembrane signaling CD3 coreceptor proteins to form the TR-CD3 (TcR or TCR). The assembly of alpha-beta TR heterodimers with CD3 occurs in the endoplasmic reticulum where a single alpha-beta TR heterodimer associates with one CD3D-CD3E heterodimer, one CD3G-CD3E heterodimer and one CD247 homodimer forming a stable octameric structure. CD3D-CD3E and CD3G-CD3E heterodimers preferentially associate with TR alpha and TR beta chains, respectively. The association of the CD247 homodimer is the last step of TcR assembly in the endoplasmic reticulum and is required for transport to the cell surface.

Its subcellular location is the cell membrane. V region of the variable domain of T cell receptor (TR) alpha chain that participates in the antigen recognition. Alpha-beta T cell receptors are antigen specific receptors which are essential to the immune response and are present on the cell surface of T lymphocytes. Recognize peptide-major histocompatibility (MH) (pMH) complexes that are displayed by antigen presenting cells (APC), a prerequisite for efficient T cell adaptive immunity against pathogens. Binding of alpha-beta TR to pMH complex initiates TR-CD3 clustering on the cell surface and intracellular activation of LCK that phosphorylates the ITAM motifs of CD3G, CD3D, CD3E and CD247 enabling the recruitment of ZAP70. In turn ZAP70 phosphorylates LAT, which recruits numerous signaling molecules to form the LAT signalosome. The LAT signalosome propagates signal branching to three major signaling pathways, the calcium, the mitogen-activated protein kinase (MAPK) kinase and the nuclear factor NF-kappa-B (NF-kB) pathways, leading to the mobilization of transcription factors that are critical for gene expression and essential for T cell growth and differentiation. The T cell repertoire is generated in the thymus, by V-(D)-J rearrangement. This repertoire is then shaped by intrathymic selection events to generate a peripheral T cell pool of self-MH restricted, non-autoaggressive T cells. Post-thymic interaction of alpha-beta TR with the pMH complexes shapes TR structural and functional avidity. This Homo sapiens (Human) protein is T cell receptor alpha variable 24.